Reading from the N-terminus, the 314-residue chain is Homoserine O-succinyltransferase (314 aa).

Residue cysteine 142 is the Acyl-thioester intermediate of the active site. The substrate site is built by lysine 163 and serine 192. Histidine 235 functions as the Proton acceptor in the catalytic mechanism. Residue glutamate 237 is part of the active site. Residue arginine 249 coordinates substrate.

Belongs to the MetA family.

It is found in the cytoplasm. The catalysed reaction is L-homoserine + succinyl-CoA = O-succinyl-L-homoserine + CoA. It participates in amino-acid biosynthesis; L-methionine biosynthesis via de novo pathway; O-succinyl-L-homoserine from L-homoserine: step 1/1. Transfers a succinyl group from succinyl-CoA to L-homoserine, forming succinyl-L-homoserine. The chain is Homoserine O-succinyltransferase from Shewanella frigidimarina (strain NCIMB 400).